The sequence spans 230 residues: Cytochrome c oxidase subunit 2 (230 aa).

Topologically, residues 1–14 (MAHPSQLGFQDAAS) are mitochondrial intermembrane. The chain crosses the membrane as a helical span at residues 15-45 (PVMEELLHFHDHALMIVFLISTLVLYIIVAM). Residues 46–59 (VSTKLTNKYILDSQ) are Mitochondrial matrix-facing. A helical transmembrane segment spans residues 60 to 87 (EIEIIWTVLPAVILILIALPSLRILYLM). Topologically, residues 88-230 (DEINDPHLTI…SWSSLMLEDA (143 aa)) are mitochondrial intermembrane. Cu cation is bound by residues H161, C196, E198, C200, H204, and M207. E198 is a Mg(2+) binding site.

Belongs to the cytochrome c oxidase subunit 2 family. Component of the cytochrome c oxidase (complex IV, CIV), a multisubunit enzyme composed of 14 subunits. The complex is composed of a catalytic core of 3 subunits MT-CO1, MT-CO2 and MT-CO3, encoded in the mitochondrial DNA, and 11 supernumerary subunits COX4I, COX5A, COX5B, COX6A, COX6B, COX6C, COX7A, COX7B, COX7C, COX8 and NDUFA4, which are encoded in the nuclear genome. The complex exists as a monomer or a dimer and forms supercomplexes (SCs) in the inner mitochondrial membrane with NADH-ubiquinone oxidoreductase (complex I, CI) and ubiquinol-cytochrome c oxidoreductase (cytochrome b-c1 complex, complex III, CIII), resulting in different assemblies (supercomplex SCI(1)III(2)IV(1) and megacomplex MCI(2)III(2)IV(2)). Found in a complex with TMEM177, COA6, COX18, COX20, SCO1 and SCO2. Interacts with TMEM177 in a COX20-dependent manner. Interacts with COX20. Interacts with COX16. Requires Cu cation as cofactor.

Its subcellular location is the mitochondrion inner membrane. The enzyme catalyses 4 Fe(II)-[cytochrome c] + O2 + 8 H(+)(in) = 4 Fe(III)-[cytochrome c] + 2 H2O + 4 H(+)(out). Component of the cytochrome c oxidase, the last enzyme in the mitochondrial electron transport chain which drives oxidative phosphorylation. The respiratory chain contains 3 multisubunit complexes succinate dehydrogenase (complex II, CII), ubiquinol-cytochrome c oxidoreductase (cytochrome b-c1 complex, complex III, CIII) and cytochrome c oxidase (complex IV, CIV), that cooperate to transfer electrons derived from NADH and succinate to molecular oxygen, creating an electrochemical gradient over the inner membrane that drives transmembrane transport and the ATP synthase. Cytochrome c oxidase is the component of the respiratory chain that catalyzes the reduction of oxygen to water. Electrons originating from reduced cytochrome c in the intermembrane space (IMS) are transferred via the dinuclear copper A center (CU(A)) of subunit 2 and heme A of subunit 1 to the active site in subunit 1, a binuclear center (BNC) formed by heme A3 and copper B (CU(B)). The BNC reduces molecular oxygen to 2 water molecules using 4 electrons from cytochrome c in the IMS and 4 protons from the mitochondrial matrix. This Gadus morhua (Atlantic cod) protein is Cytochrome c oxidase subunit 2 (mt-co2).